The chain runs to 577 residues: MFS-type transporter pgmG (577 aa).

The disordered stretch occupies residues 1–32 (MSETVTQTETDQRPATARSLGAEEKEAKSDEQ). Positions 21–31 (GAEEKEAKSDE) are enriched in basic and acidic residues. A run of 8 helical transmembrane segments spans residues 45-65 (FIVI…NTIV), 84-104 (WLSV…SKIY), 111-131 (WLYL…GAAP), 141-161 (ALAG…LSVN), 174-194 (TGLT…GFAV), 218-238 (PLTV…LFML), 259-279 (LGTI…NFGG), and 292-312 (CFVV…YCIG). Asn-317 carries an N-linked (GlcNAc...) asparagine glycan. A helical membrane pass occupies residues 330–350 (FIILFVQTASVATVFFVPIYF). Asn-360 is a glycosylation site (N-linked (GlcNAc...) asparagine). The next 5 helical transmembrane spans lie at 363 to 383 (AIDA…AMIL), 395 to 415 (MPWY…MYTI), 426 to 446 (GYMI…FAVA), 457 to 477 (VATG…LAIA), and 532 to 552 (ISQV…LAIF).

This sequence belongs to the major facilitator superfamily. TCR/Tet family.

It is found in the membrane. In terms of biological role, MFS-type transporter; part of the gene cluster that mediates the biosynthesis of pleosporalin A, ascomycone A, as well as a third cryptic naphthoquinone derived pigment, all responsible for the coloration of conidia. Seems not to be involved in pigment biosynthesis although its expression is regulated by the cluster-specific transcription factor pgmR. This is MFS-type transporter pgmG from Aspergillus terreus (strain NIH 2624 / FGSC A1156).